A 61-amino-acid polypeptide reads, in one-letter code: MKYTKFEKARIIGARALQIAMGAPVIIDIPKNVIDPVDIATIEFENNVIPITIKRVSKVLN.

It belongs to the archaeal Rpo6/eukaryotic RPB6 RNA polymerase subunit family. Part of the RNA polymerase complex.

The protein resides in the cytoplasm. It catalyses the reaction RNA(n) + a ribonucleoside 5'-triphosphate = RNA(n+1) + diphosphate. Its function is as follows. DNA-dependent RNA polymerase (RNAP) catalyzes the transcription of DNA into RNA using the four ribonucleoside triphosphates as substrates. This chain is DNA-directed RNA polymerase subunit Rpo6, found in Thermoplasma volcanium (strain ATCC 51530 / DSM 4299 / JCM 9571 / NBRC 15438 / GSS1).